The primary structure comprises 175 residues: Large ribosomal subunit protein uL10 (175 aa).

It belongs to the universal ribosomal protein uL10 family. In terms of assembly, part of the ribosomal stalk of the 50S ribosomal subunit. The N-terminus interacts with L11 and the large rRNA to form the base of the stalk. The C-terminus forms an elongated spine to which L12 dimers bind in a sequential fashion forming a multimeric L10(L12)X complex.

Forms part of the ribosomal stalk, playing a central role in the interaction of the ribosome with GTP-bound translation factors. This Halorhodospira halophila (strain DSM 244 / SL1) (Ectothiorhodospira halophila (strain DSM 244 / SL1)) protein is Large ribosomal subunit protein uL10.